The sequence spans 576 residues: Proline--tRNA ligase (576 aa).

Belongs to the class-II aminoacyl-tRNA synthetase family. ProS type 1 subfamily. In terms of assembly, homodimer.

Its subcellular location is the cytoplasm. The enzyme catalyses tRNA(Pro) + L-proline + ATP = L-prolyl-tRNA(Pro) + AMP + diphosphate. Functionally, catalyzes the attachment of proline to tRNA(Pro) in a two-step reaction: proline is first activated by ATP to form Pro-AMP and then transferred to the acceptor end of tRNA(Pro). As ProRS can inadvertently accommodate and process non-cognate amino acids such as alanine and cysteine, to avoid such errors it has two additional distinct editing activities against alanine. One activity is designated as 'pretransfer' editing and involves the tRNA(Pro)-independent hydrolysis of activated Ala-AMP. The other activity is designated 'posttransfer' editing and involves deacylation of mischarged Ala-tRNA(Pro). The misacylated Cys-tRNA(Pro) is not edited by ProRS. This chain is Proline--tRNA ligase, found in Bordetella parapertussis (strain 12822 / ATCC BAA-587 / NCTC 13253).